Consider the following 161-residue polypeptide: Peptidyl-prolyl cis-trans isomerase-like 1 (161 aa).

The 155-residue stretch at 1–155 (MATDVVFDTS…DEVKIIRAKV (155 aa)) folds into the PPIase cyclophilin-type domain.

This sequence belongs to the cyclophilin-type PPIase family. PPIL1 subfamily.

It carries out the reaction [protein]-peptidylproline (omega=180) = [protein]-peptidylproline (omega=0). PPIases accelerate the folding of proteins. It catalyzes the cis-trans isomerization of proline imidic peptide bonds in oligopeptides. This Aspergillus fumigatus (strain ATCC MYA-4609 / CBS 101355 / FGSC A1100 / Af293) (Neosartorya fumigata) protein is Peptidyl-prolyl cis-trans isomerase-like 1 (cyp1).